Here is a 634-residue protein sequence, read N- to C-terminus: DNA-directed RNA polymerase subunit gamma (634 aa).

Cys74, Cys76, Cys89, and Cys92 together coordinate Zn(2+). The Mg(2+) site is built by Asp471, Asp473, and Asp475.

This sequence belongs to the RNA polymerase beta' chain family. RpoC1 subfamily. As to quaternary structure, in cyanobacteria the RNAP catalytic core is composed of 2 alpha, 1 beta, 1 beta', 1 gamma and 1 omega subunit. When a sigma factor is associated with the core the holoenzyme is formed, which can initiate transcription. Mg(2+) is required as a cofactor. Zn(2+) serves as cofactor.

It catalyses the reaction RNA(n) + a ribonucleoside 5'-triphosphate = RNA(n+1) + diphosphate. Functionally, DNA-dependent RNA polymerase catalyzes the transcription of DNA into RNA using the four ribonucleoside triphosphates as substrates. This is DNA-directed RNA polymerase subunit gamma from Prochlorococcus marinus (strain AS9601).